The sequence spans 635 residues: Threonine--tRNA ligase (635 aa).

One can recognise a TGS domain in the interval 1-61 (MVSIRLPDGS…DHDVALAIVT (61 aa)). The catalytic stretch occupies residues 242–533 (DHRKLGKQLD…LIEHHAGAMP (292 aa)). Zn(2+)-binding residues include Cys-333, His-384, and His-510.

The protein belongs to the class-II aminoacyl-tRNA synthetase family. In terms of assembly, homodimer. It depends on Zn(2+) as a cofactor.

The protein localises to the cytoplasm. It catalyses the reaction tRNA(Thr) + L-threonine + ATP = L-threonyl-tRNA(Thr) + AMP + diphosphate + H(+). Functionally, catalyzes the attachment of threonine to tRNA(Thr) in a two-step reaction: L-threonine is first activated by ATP to form Thr-AMP and then transferred to the acceptor end of tRNA(Thr). Also edits incorrectly charged L-seryl-tRNA(Thr). In Paraburkholderia xenovorans (strain LB400), this protein is Threonine--tRNA ligase.